Consider the following 418-residue polypeptide: 1-deoxy-D-xylulose 5-phosphate reductoisomerase (418 aa).

5 residues coordinate NADPH: threonine 32, glycine 33, serine 34, isoleucine 35, and asparagine 150. Residue lysine 151 participates in 1-deoxy-D-xylulose 5-phosphate binding. Glutamate 152 contacts NADPH. Aspartate 174 lines the Mn(2+) pocket. 4 residues coordinate 1-deoxy-D-xylulose 5-phosphate: serine 175, glutamate 176, serine 200, and histidine 223. Glutamate 176 is a Mn(2+) binding site. Glycine 229 is an NADPH binding site. Residues serine 236, asparagine 241, lysine 242, and glutamate 245 each contribute to the 1-deoxy-D-xylulose 5-phosphate site. Mn(2+) is bound at residue glutamate 245.

Belongs to the DXR family. It depends on Mg(2+) as a cofactor. Requires Mn(2+) as cofactor.

The enzyme catalyses 2-C-methyl-D-erythritol 4-phosphate + NADP(+) = 1-deoxy-D-xylulose 5-phosphate + NADPH + H(+). Its pathway is isoprenoid biosynthesis; isopentenyl diphosphate biosynthesis via DXP pathway; isopentenyl diphosphate from 1-deoxy-D-xylulose 5-phosphate: step 1/6. Functionally, catalyzes the NADPH-dependent rearrangement and reduction of 1-deoxy-D-xylulose-5-phosphate (DXP) to 2-C-methyl-D-erythritol 4-phosphate (MEP). The chain is 1-deoxy-D-xylulose 5-phosphate reductoisomerase from Streptomyces coelicolor (strain ATCC BAA-471 / A3(2) / M145).